The sequence spans 195 residues: UMP-CMP kinase (195 aa).

An ATP-binding site is contributed by 17–22 (GSGKGT). An NMP region spans residues 37–66 (SAGDLLRQEQQSGSKDGEMIATMIKNGEIV). A ribonucleoside 5'-phosphate-binding positions include R43, 64–66 (EIV), and 91–94 (GFPR). A CMP-binding site is contributed by N98. The segment at 131-141 (KRGESSGRSDD) is LID. R132 is an ATP binding site. A ribonucleoside 5'-phosphate is bound by residues R138 and R149. R177 is an ATP binding site.

It belongs to the adenylate kinase family. UMP-CMP kinase subfamily. Monomer. Mg(2+) is required as a cofactor.

Its subcellular location is the cytoplasm. It is found in the nucleus. The enzyme catalyses CMP + ATP = CDP + ADP. The catalysed reaction is dCMP + ATP = dCDP + ADP. It catalyses the reaction UMP + ATP = UDP + ADP. In terms of biological role, catalyzes the phosphorylation of pyrimidine nucleoside monophosphates at the expense of ATP. Plays an important role in de novo pyrimidine nucleotide biosynthesis. Has preference for UMP and CMP as phosphate acceptors. The polypeptide is UMP-CMP kinase (Dictyostelium discoideum (Social amoeba)).